The following is a 610-amino-acid chain: Elongation factor 4 (610 aa).

Residues 11–193 enclose the tr-type G domain; that stretch reads ENIRNFSIIA…QIVEKVPAPS (183 aa). GTP contacts are provided by residues 23–28 and 140–143; these read DHGKST and NKID.

The protein belongs to the TRAFAC class translation factor GTPase superfamily. Classic translation factor GTPase family. LepA subfamily.

Its subcellular location is the cell membrane. It catalyses the reaction GTP + H2O = GDP + phosphate + H(+). Functionally, required for accurate and efficient protein synthesis under certain stress conditions. May act as a fidelity factor of the translation reaction, by catalyzing a one-codon backward translocation of tRNAs on improperly translocated ribosomes. Back-translocation proceeds from a post-translocation (POST) complex to a pre-translocation (PRE) complex, thus giving elongation factor G a second chance to translocate the tRNAs correctly. Binds to ribosomes in a GTP-dependent manner. The sequence is that of Elongation factor 4 from Streptococcus equi subsp. equi (strain 4047).